The primary structure comprises 403 residues: Chromatin structure-remodeling complex subunit SFH1 (403 aa).

Positions 58–115 are disordered; sequence FPTFDIDSDSNDEEQSSASAGNDDPQANANGGEAAGVNGQGSGDGGSANTGAGRHGKS. Over residues 63–72 the composition is skewed to acidic residues; the sequence is IDSDSNDEEQ. The span at 84–94 shows a compositional bias: low complexity; that stretch reads ANANGGEAAGV. The span at 95–105 shows a compositional bias: gly residues; sequence NGQGSGDGGSA.

It belongs to the SNF5 family.

The protein localises to the nucleus. Its function is as follows. Part of the chromatin structure-remodeling complex (RSC) which is involved in transcription regulation and nucleosome positioning. RSC is responsible for the transfer of a histone octamer from a nucleosome core particle to naked DNA. The reaction requires ATP and involves an activated RSC-nucleosome intermediate. Remodeling reaction also involves DNA translocation, DNA twist and conformational change. As a reconfigurer of centromeric and flanking nucleosomes, RSC complex is required both for proper kinetochore function in chromosome segregation and, via a PKC1-dependent signaling pathway, for organization of the cellular cytoskeleton. This subunit is essential for mitotic growth and required for cell cycle progression. This chain is Chromatin structure-remodeling complex subunit SFH1 (SFH1), found in Candida glabrata (strain ATCC 2001 / BCRC 20586 / JCM 3761 / NBRC 0622 / NRRL Y-65 / CBS 138) (Yeast).